The following is a 426-amino-acid chain: Fc receptor-like B (426 aa).

An N-terminal signal peptide occupies residues 1-17 (MWPLTALLLLVPSSGQA). 2 consecutive Ig-like C2-type domains span residues 23–101 (PILS…LSVS) and 103–189 (DWLI…VAVT). 2 disulfide bridges follow: C44-C85 and C124-C168. N-linked (GlcNAc...) asparagine glycosylation occurs at N152. The tract at residues 400 to 426 (ELRGTPETPTSHFAVSPGTPETTPVES) is disordered. A compositionally biased stretch (polar residues) spans 406-426 (ETPTSHFAVSPGTPETTPVES).

Expressed at low levels. Expressed in B-lymphocytes. Detected in tonsil, lung, kidney, spleen and placenta. Expressed by a small subset of germinal center B-cells in tonsils and by melanocytes (at protein level).

The protein resides in the cytoplasm. Its subcellular location is the endoplasmic reticulum. The chain is Fc receptor-like B (FCRLB) from Homo sapiens (Human).